A 299-amino-acid polypeptide reads, in one-letter code: N-acetylneuraminate lyase (299 aa).

Aceneuramate contacts are provided by S45 and S46. Y134 (proton donor) is an active-site residue. K161 acts as the Schiff-base intermediate with substrate in catalysis. Residues T163, G185, D187, and E188 each contribute to the aceneuramate site.

It belongs to the DapA family. NanA subfamily. As to quaternary structure, homotetramer.

It localises to the cytoplasm. It catalyses the reaction aceneuramate = aldehydo-N-acetyl-D-mannosamine + pyruvate. Its pathway is amino-sugar metabolism; N-acetylneuraminate degradation; D-fructose 6-phosphate from N-acetylneuraminate: step 1/5. Functionally, catalyzes the reversible aldol cleavage of N-acetylneuraminic acid (sialic acid; Neu5Ac) to form pyruvate and N-acetylmannosamine (ManNAc) via a Schiff base intermediate. The protein is N-acetylneuraminate lyase of Rhizobium meliloti (strain 1021) (Ensifer meliloti).